The chain runs to 571 residues: MNWIFIFLAAAVAIGCEARQERTYTVCQKPEGDLHYFKEGRKTDEELCAKRLATAYFHDEVNQTGWAFLEVDVISPKIPHYLQGYAAGFAEGRATRHLIDLHIINTVNGYCDGAKHFCDELGEFMVDNLKWMEQEIRENPEDEYWQQVNLTVNQLFGLIHGYENQLGAEIDFKQIAVHPIFMIQIAGDLEDLAMKFKKPENPKKVFSGPGHCSALVKLLPKNEDILFSHVTWSSYGTMLRINKKYSFKTGDPGQIYSFSSYPASITSTDDFVLTSAKLAILETTIGNYNEKSLDLITPNTVLTWIRAEIAHRTASSGLQWAEAFGRHNSGTYNNEWVVVDYKQFHRGKEVQPETGIIHVVEQMPGHIVHSDKTAHLFRETYWPGYNQPYYKQIIRFSDTDKMVEKFGDWYSYDKTPRALIFKRDHNTVTDMSSMIALMRSNNYTKDPLSKCDCNPPYSAENAIACRSDLNPLNGTYPFKSLGFRDHGAIDVKVTNSKLINSLQFTAVSGPPGGVTKDVPIFDWKTSPLREKVPHFGQPDRWNFAPVTYKWRKDAHRHYHLYQKLHKELSSL.

Residues 1-18 (MNWIFIFLAAAVAIGCEA) form the signal peptide. N-linked (GlcNAc...) asparagine glycosylation is found at Asn62, Asn149, Asn442, and Asn473.

This sequence belongs to the phospholipase B-like family.

The protein localises to the lysosome. Its function is as follows. Putative phospholipase. The sequence is that of Putative phospholipase B-like 1 from Caenorhabditis elegans.